Consider the following 428-residue polypeptide: Gamma-glutamyl phosphate reductase (428 aa).

This sequence belongs to the gamma-glutamyl phosphate reductase family.

The protein localises to the cytoplasm. It catalyses the reaction L-glutamate 5-semialdehyde + phosphate + NADP(+) = L-glutamyl 5-phosphate + NADPH + H(+). It functions in the pathway amino-acid biosynthesis; L-proline biosynthesis; L-glutamate 5-semialdehyde from L-glutamate: step 2/2. Catalyzes the NADPH-dependent reduction of L-glutamate 5-phosphate into L-glutamate 5-semialdehyde and phosphate. The product spontaneously undergoes cyclization to form 1-pyrroline-5-carboxylate. The sequence is that of Gamma-glutamyl phosphate reductase from Agrobacterium fabrum (strain C58 / ATCC 33970) (Agrobacterium tumefaciens (strain C58)).